We begin with the raw amino-acid sequence, 102 residues long: ATP-dependent Clp protease adapter protein ClpS (102 aa).

It belongs to the ClpS family. Binds to the N-terminal domain of the chaperone ClpA.

Involved in the modulation of the specificity of the ClpAP-mediated ATP-dependent protein degradation. The polypeptide is ATP-dependent Clp protease adapter protein ClpS (Shewanella woodyi (strain ATCC 51908 / MS32)).